The sequence spans 345 residues: Phosphoribosylformylglycinamidine cyclo-ligase (345 aa).

The protein belongs to the AIR synthase family.

The protein resides in the cytoplasm. The catalysed reaction is 2-formamido-N(1)-(5-O-phospho-beta-D-ribosyl)acetamidine + ATP = 5-amino-1-(5-phospho-beta-D-ribosyl)imidazole + ADP + phosphate + H(+). It functions in the pathway purine metabolism; IMP biosynthesis via de novo pathway; 5-amino-1-(5-phospho-D-ribosyl)imidazole from N(2)-formyl-N(1)-(5-phospho-D-ribosyl)glycinamide: step 2/2. This chain is Phosphoribosylformylglycinamidine cyclo-ligase, found in Pectobacterium atrosepticum (strain SCRI 1043 / ATCC BAA-672) (Erwinia carotovora subsp. atroseptica).